A 558-amino-acid polypeptide reads, in one-letter code: GPI mannosyltransferase 3 (558 aa).

The next 4 helical transmembrane spans lie at 53–73, 81–101, 164–184, and 190–210; these read GLRS…LKLL, VWFA…VSVF, AYCG…LLTL, and VPFL…AVVL. N-linked (GlcNAc...) asparagine glycosylation occurs at Asn220. The chain crosses the membrane as a helical span at residues 234 to 254; sequence IVLTGLIVLVAVLGGVMVLDY. Asn275 carries N-linked (GlcNAc...) asparagine glycosylation. The next 4 membrane-spanning stretches (helical) occupy residues 292–312, 323–343, 348–368, and 372–392; these read VLVG…LVLW, PVLG…LIDH, FVFV…VRWS, and AVVV…IYLM.

It belongs to the glycosyltransferase 22 family. PIGB subfamily.

It localises to the endoplasmic reticulum membrane. The protein operates within glycolipid biosynthesis; glycosylphosphatidylinositol-anchor biosynthesis. Functionally, mannosyltransferase involved in glycosylphosphatidylinositol-anchor biosynthesis. Transfers the third alpha-1,2-mannose to Man2-GlcN-acyl-PI during GPI precursor assembly. This Trypanosoma brucei brucei protein is GPI mannosyltransferase 3 (GPI10).